Here is a 93-residue protein sequence, read N- to C-terminus: Small ribosomal subunit protein uS19c (93 aa).

This sequence belongs to the universal ribosomal protein uS19 family.

Its subcellular location is the plastid. The protein localises to the chloroplast. Its function is as follows. Protein S19 forms a complex with S13 that binds strongly to the 16S ribosomal RNA. The chain is Small ribosomal subunit protein uS19c (rps19-A) from Zea mays (Maize).